Reading from the N-terminus, the 764-residue chain is 5-methyltetrahydropteroyltriglutamate--homocysteine methyltransferase (764 aa).

5-methyltetrahydropteroyltri-L-glutamate is bound by residues 16 to 19 and Lys117; that span reads RELK. L-homocysteine is bound by residues 442–444 and Glu495; that span reads IGS. Residues 442–444 and Glu495 each bind L-methionine; that span reads IGS. Residues 526 to 527 and Trp572 contribute to the 5-methyltetrahydropteroyltri-L-glutamate site; that span reads RC. An L-homocysteine-binding site is contributed by Asp610. L-methionine is bound at residue Asp610. Glu616 contacts 5-methyltetrahydropteroyltri-L-glutamate. Zn(2+)-binding residues include His652, Cys654, and Glu676. His705 functions as the Proton donor in the catalytic mechanism. Cys737 lines the Zn(2+) pocket.

The protein belongs to the vitamin-B12 independent methionine synthase family. The cofactor is Zn(2+).

It catalyses the reaction 5-methyltetrahydropteroyltri-L-glutamate + L-homocysteine = tetrahydropteroyltri-L-glutamate + L-methionine. Its pathway is amino-acid biosynthesis; L-methionine biosynthesis via de novo pathway; L-methionine from L-homocysteine (MetE route): step 1/1. Its function is as follows. Catalyzes the transfer of a methyl group from 5-methyltetrahydrofolate to homocysteine resulting in methionine formation. This Bordetella bronchiseptica (strain ATCC BAA-588 / NCTC 13252 / RB50) (Alcaligenes bronchisepticus) protein is 5-methyltetrahydropteroyltriglutamate--homocysteine methyltransferase.